A 287-amino-acid polypeptide reads, in one-letter code: Ribonuclease Z (287 aa).

Histidine 64, histidine 66, aspartate 68, histidine 69, histidine 124, aspartate 191, and histidine 250 together coordinate Zn(2+). The Proton acceptor role is filled by aspartate 68.

Belongs to the RNase Z family. In terms of assembly, homodimer. It depends on Zn(2+) as a cofactor.

The enzyme catalyses Endonucleolytic cleavage of RNA, removing extra 3' nucleotides from tRNA precursor, generating 3' termini of tRNAs. A 3'-hydroxy group is left at the tRNA terminus and a 5'-phosphoryl group is left at the trailer molecule.. Its function is as follows. Zinc phosphodiesterase, which displays some tRNA 3'-processing endonuclease activity. Probably involved in tRNA maturation, by removing a 3'-trailer from precursor tRNA. The polypeptide is Ribonuclease Z (Pyrobaculum calidifontis (strain DSM 21063 / JCM 11548 / VA1)).